The primary structure comprises 539 residues: Probable malate:quinone oxidoreductase (539 aa).

It belongs to the MQO family. FAD is required as a cofactor.

The catalysed reaction is (S)-malate + a quinone = a quinol + oxaloacetate. The protein operates within carbohydrate metabolism; tricarboxylic acid cycle; oxaloacetate from (S)-malate (quinone route): step 1/1. The protein is Probable malate:quinone oxidoreductase of Sodalis glossinidius (strain morsitans).